The sequence spans 841 residues: Protein NLP6 (841 aa).

Positions 539 to 624 constitute an RWP-RK domain; sequence EAKTVKKSER…IDSVQGADGS (86 aa). Residues 649-682 are disordered; that stretch reads NCPPTSTSPLSNLQDVKIENRDAEDSAGSSTSRA. The segment covering 651–662 has biased composition (polar residues); sequence PPTSTSPLSNLQ. One can recognise a PB1 domain in the interval 741–823; sequence LVSIKATYRE…NTLRLSVHDV (83 aa).

The protein localises to the nucleus. Its function is as follows. Probable transcription factor. The polypeptide is Protein NLP6 (NLP6) (Arabidopsis thaliana (Mouse-ear cress)).